We begin with the raw amino-acid sequence, 183 residues long: MKIMEPEIKIVNVVVSTKIGDNIDLEEVAMILENAEYEPEQFPGLVCRLSVPKVALLIFRSGKVNCTGAKSKEEAEIAIKKIIKELKDAGIDVIENPEIKIQNMVATADLGIEPNLDDIALMVEGTEYEPEQFPGLVYRLDDPKVVVLIFGSGKVVITGLKSEEDAKRALKKILDTIKEVQEL.

2 repeat units span residues 10–86 (IVNV…IKEL) and 101–177 (IQNM…LDTI).

It belongs to the TBP family.

In terms of biological role, general factor that plays a role in the activation of archaeal genes transcribed by RNA polymerase. Binds specifically to the TATA box promoter element which lies close to the position of transcription initiation. This chain is TATA-box-binding protein (tbp), found in Methanocaldococcus jannaschii (strain ATCC 43067 / DSM 2661 / JAL-1 / JCM 10045 / NBRC 100440) (Methanococcus jannaschii).